The chain runs to 357 residues: Aspartate carbamoyltransferase catalytic subunit (357 aa).

A compositionally biased stretch (polar residues) spans 1 to 17 (MSNSIDSQSIPTISPTD). The interval 1–21 (MSNSIDSQSIPTISPTDYTKF) is disordered. Residues Arg97 and Thr98 each contribute to the carbamoyl phosphate site. Lys125 contributes to the L-aspartate binding site. Arg147, His177, and Gln180 together coordinate carbamoyl phosphate. The L-aspartate site is built by Arg211 and Arg266. Residues Gly307 and Pro308 each coordinate carbamoyl phosphate.

The protein belongs to the aspartate/ornithine carbamoyltransferase superfamily. ATCase family. As to quaternary structure, heterododecamer (2C3:3R2) of six catalytic PyrB chains organized as two trimers (C3), and six regulatory PyrI chains organized as three dimers (R2).

It carries out the reaction carbamoyl phosphate + L-aspartate = N-carbamoyl-L-aspartate + phosphate + H(+). Its pathway is pyrimidine metabolism; UMP biosynthesis via de novo pathway; (S)-dihydroorotate from bicarbonate: step 2/3. In terms of biological role, catalyzes the condensation of carbamoyl phosphate and aspartate to form carbamoyl aspartate and inorganic phosphate, the committed step in the de novo pyrimidine nucleotide biosynthesis pathway. In Psychrobacter arcticus (strain DSM 17307 / VKM B-2377 / 273-4), this protein is Aspartate carbamoyltransferase catalytic subunit.